Consider the following 390-residue polypeptide: S-adenosylmethionine synthase 1 (390 aa).

Position 9 (Glu-9) interacts with Mg(2+). Residue His-15 coordinates ATP. Glu-43 serves as a coordination point for K(+). L-methionine is bound by residues Glu-56 and Gln-99. ATP-binding positions include 167–169 (DGK), 235–238 (SGRF), Asp-246, 252–253 (RK), Ala-269, Lys-273, and Lys-277. Residue Asp-246 coordinates L-methionine. Lys-277 contacts L-methionine.

The protein belongs to the AdoMet synthase family. In terms of assembly, homotetramer. The cofactor is Mn(2+). Mg(2+) is required as a cofactor. Co(2+) serves as cofactor. It depends on K(+) as a cofactor.

It is found in the cytoplasm. The enzyme catalyses L-methionine + ATP + H2O = S-adenosyl-L-methionine + phosphate + diphosphate. It participates in amino-acid biosynthesis; S-adenosyl-L-methionine biosynthesis; S-adenosyl-L-methionine from L-methionine: step 1/1. Functionally, catalyzes the formation of S-adenosylmethionine from methionine and ATP. The reaction comprises two steps that are both catalyzed by the same enzyme: formation of S-adenosylmethionine (AdoMet) and triphosphate, and subsequent hydrolysis of the triphosphate. In Petunia hybrida (Petunia), this protein is S-adenosylmethionine synthase 1 (SAM1).